The following is a 682-amino-acid chain: Solute carrier organic anion transporter family member 2B1 (682 aa).

The tract at residues Met1–Asp30 is disordered. Residues Met1–Lys41 are Cytoplasmic-facing. Basic and acidic residues predominate over residues Glu13–Asp30. The residue at position 21 (Ser21) is a Phosphoserine. The chain crosses the membrane as a helical span at residues Phe42–Leu61. Residues Lys62 to Gly80 lie on the Extracellular side of the membrane. The chain crosses the membrane as a helical span at residues Leu81–Gly101. Over Ser102 to Pro107 the chain is Cytoplasmic. The chain crosses the membrane as a helical span at residues Arg108 to Glu132. The Extracellular portion of the chain corresponds to Pro133–His176. Asn165 carries N-linked (GlcNAc...) asparagine glycosylation. Residues Leu177 to Asp206 form a helical membrane-spanning segment. The Cytoplasmic segment spans residues Asp207–Thr225. A helical transmembrane segment spans residues Met226–Ile246. The Extracellular segment spans residues Asp247–Val264. N-linked (GlcNAc...) asparagine glycosylation occurs at Asn255. The helical transmembrane segment at Gly265–Pro289 threads the bilayer. The Cytoplasmic segment spans residues Arg290–Arg354. Phosphoserine occurs at positions 311 and 314. Residues Thr355–Ala376 traverse the membrane as a helical segment. Topologically, residues Gly377–Phe396 are extracellular. A helical membrane pass occupies residues Ala397–Val420. Residues Lys421–His424 lie on the Cytoplasmic side of the membrane. A helical transmembrane segment spans residues Leu425–Leu448. The Extracellular segment spans residues Phe449–Phe552. Residues Pro471–Ala531 form the Kazal-like domain. 3 cysteine pairs are disulfide-bonded: Cys477–Cys508, Cys483–Cys504, and Cys492–Cys529. N-linked (GlcNAc...) asparagine glycans are attached at residues Asn526 and Asn533. The helical transmembrane segment at Ile553 to Leu575 threads the bilayer. The Cytoplasmic portion of the chain corresponds to Arg576 to Thr584. Residues Leu585 to Ile610 form a helical membrane-spanning segment. Residues Asp611–Gln643 are Extracellular-facing. Residues Phe644–Leu661 form a helical membrane-spanning segment. Residues Arg662–Leu682 are Cytoplasmic-facing.

It belongs to the organo anion transporter (TC 2.A.60) family. As to expression, expressed in liver, kidney, heart, lung and retina. Widely distributed in all brain regions.

It localises to the cell membrane. The protein resides in the basal cell membrane. It is found in the apical cell membrane. The catalysed reaction is coproporphyrin III(out) = coproporphyrin III(in). The enzyme catalyses substance P(out) = substance P(in). It carries out the reaction taurocholate(out) = taurocholate(in). It catalyses the reaction prostaglandin E1(out) = prostaglandin E1(in). The catalysed reaction is prostaglandin E2(out) = prostaglandin E2(in). The enzyme catalyses prostaglandin D2(out) = prostaglandin D2(in). It carries out the reaction leukotriene C4(out) = leukotriene C4(in). It catalyses the reaction L-thyroxine(out) = L-thyroxine(in). Its function is as follows. Mediates the Na(+)-independent transport of organic anions such as taurocholate, the prostaglandins D2 (PGD2), E1 (PGE1) and E2 (PGE2), leukotriene C4, thromboxane B2 and L-thyroxine. Also plays a role in the reuptake of neuropeptides such as substance P/TAC1 and vasoactive intestinal peptide/VIP released from retinal neurons. May act as a heme transporter that promotes cellular iron availability. Also transports heme by-product coproporphyrin III (CPIII), and may be involved in their hepatic disposition. May contribute to regulate the transport of organic compounds in testis across the blood-testis-barrier. Shows a pH-sensitive substrate specificity which may be ascribed to the protonation state of the binding site and leads to a stimulation of substrate transport in an acidic microenvironment. The exact transport mechanism has not been yet deciphered but most likely involves an anion exchange, coupling the cellular uptake of organic substrate with the efflux of an anionic compound. Hydrogencarbonate/HCO3(-) acts as a probable counteranion that exchanges for organic anions. Cytoplasmic glutamate may also act as counteranion in the placenta. The protein is Solute carrier organic anion transporter family member 2B1 of Rattus norvegicus (Rat).